The sequence spans 349 residues: UDP-N-acetylenolpyruvoylglucosamine reductase (349 aa).

In terms of domain architecture, FAD-binding PCMH-type spans 25-197; that stretch reads GIAARARFAA…VAVTFRLPKQ (173 aa). Arg173 is a catalytic residue. Residue Ser249 is the Proton donor of the active site. Glu345 is a catalytic residue.

It belongs to the MurB family. FAD serves as cofactor.

The protein localises to the cytoplasm. It carries out the reaction UDP-N-acetyl-alpha-D-muramate + NADP(+) = UDP-N-acetyl-3-O-(1-carboxyvinyl)-alpha-D-glucosamine + NADPH + H(+). It functions in the pathway cell wall biogenesis; peptidoglycan biosynthesis. Functionally, cell wall formation. The chain is UDP-N-acetylenolpyruvoylglucosamine reductase from Burkholderia cenocepacia (strain HI2424).